Here is a 434-residue protein sequence, read N- to C-terminus: Adenylosuccinate synthetase (434 aa).

GTP-binding positions include 22–28 (GDEGKGK) and 50–52 (GHT). The Proton acceptor role is filled by aspartate 23. Mg(2+) contacts are provided by aspartate 23 and glycine 50. IMP is bound by residues 23-26 (DEGK), 48-51 (NAGH), threonine 139, arginine 153, glutamine 234, threonine 249, and arginine 313. Catalysis depends on histidine 51, which acts as the Proton donor. 309-315 (ATTGRKR) contacts substrate. Residues arginine 315, 341-343 (KLD), and 423-425 (SVG) contribute to the GTP site.

Belongs to the adenylosuccinate synthetase family. In terms of assembly, homodimer. Mg(2+) serves as cofactor.

Its subcellular location is the cytoplasm. It catalyses the reaction IMP + L-aspartate + GTP = N(6)-(1,2-dicarboxyethyl)-AMP + GDP + phosphate + 2 H(+). It participates in purine metabolism; AMP biosynthesis via de novo pathway; AMP from IMP: step 1/2. In terms of biological role, plays an important role in the de novo pathway of purine nucleotide biosynthesis. Catalyzes the first committed step in the biosynthesis of AMP from IMP. In Chlorobium phaeobacteroides (strain DSM 266 / SMG 266 / 2430), this protein is Adenylosuccinate synthetase.